Here is a 972-residue protein sequence, read N- to C-terminus: Hyaluronan synthase (972 aa).

The A1 stretch occupies residues 152 to 325 (KPEHQHVGLS…VSLDWRLEQF (174 aa)). The tract at residues 432-604 (EDSHINRVPL…IRAWHLTDGF (173 aa)) is A2.

Belongs to the glycosyltransferase 2 family. CS/HAS subfamily. Requires Mg(2+) as cofactor. Co(2+) serves as cofactor.

It is found in the cell membrane. It carries out the reaction [hyaluronan](n) + UDP-N-acetyl-alpha-D-glucosamine = N-acetyl-beta-D-glucosaminyl-(1-&gt;4)-[hyaluronan](n) + UDP + H(+). It catalyses the reaction N-acetyl-beta-D-glucosaminyl-(1-&gt;4)-[hyaluronan](n) + UDP-alpha-D-glucuronate = [hyaluronan](n+1) + UDP + H(+). The catalysed reaction is 3-O-(beta-D-GalNAc-(1-&gt;4)-beta-D-GlcA-(1-&gt;3)-beta-D-Gal-(1-&gt;3)-beta-D-Gal-(1-&gt;4)-beta-D-Xyl)-L-seryl-[protein] + UDP-alpha-D-glucuronate = 3-O-(beta-D-GlcA-(1-&gt;3)-beta-D-GalNAc-(1-&gt;4)-beta-D-GlcA-(1-&gt;3)-beta-D-Gal-(1-&gt;3)-beta-D-Gal-(1-&gt;4)-beta-D-Xyl)-L-seryl-[protein] + UDP + H(+). The enzyme catalyses 3-O-{[beta-D-GalNAc-(1-&gt;4)-beta-D-GlcA-(1-&gt;3)](n)-beta-D-GalNAc-(1-&gt;4)-beta-D-GlcA-(1-&gt;3)-beta-D-Gal-(1-&gt;3)-beta-D-Gal-(1-&gt;4)-beta-D-Xyl}-L-seryl-[protein] + UDP-alpha-D-glucuronate = 3-O-{beta-D-GlcA-(1-&gt;3)-[beta-D-GalNAc-(1-&gt;4)-beta-D-GlcA-(1-&gt;3)](n)-beta-D-GalNAc-(1-&gt;4)-beta-D-GlcA-(1-&gt;3)-beta-D-Gal-(1-&gt;3)-beta-D-Gal-(1-&gt;4)-beta-D-Xyl}-L-seryl-[protein] + UDP + H(+). In terms of biological role, catalyzes the polymerization of hyaluronan, a polysaccharide composed of a repeating disaccharide of N-acetylglucosamine (GlcNAc) and glucuronic acid (GlcUA) units. Each unit has the composition in beta-(1-&gt;4)-GlcUA-beta-(1-&gt;3)-GlcNAc. The chain is Hyaluronan synthase (hyaD) from Pasteurella multocida.